A 643-amino-acid chain; its full sequence is Asparagine synthetase domain-containing protein 1 (643 aa).

C2 acts as the For GATase activity in catalysis. Residues 2–184 (CGICCSVNFS…ASGLFRIDLK (183 aa)) form the Glutamine amidotransferase type-2 domain. Residues 285-601 (QFIDVLSVAV…GLTASALLPK (317 aa)) form the Asparagine synthetase domain.

This chain is Asparagine synthetase domain-containing protein 1 (ASNSD1), found in Homo sapiens (Human).